A 463-amino-acid chain; its full sequence is MKSILVKDIYRNTEKYAGQEIVIEGWIRTLRASKAFGFIEVNDGSFFKNIQVVFEEGLENFAEVSKLSISTAIIVKGKLEITPDAKQPFEIKATSIEVEGESDSDYPLQKKRHTFEFLREIAHLRPRSNTFSAVFRVRSLAAFAIHQFFQERGFVYTHTPIITGSDAEGAGEMFRITTLDPKNPGLNEAGEVDFTKDFFGKETSLTVSGQLQGEAYALAFRNIYTFGPTFRAENSHTARHASEFWMIEPEIAFADLQDNMELAEEMLKYIINYVMENAPEEMEFFNSFVDKGLLDRLNNVATSDFGRVTYTEAIEILQKSGETFEYPVAWGTDLQTEHERYLTEKVFKKPVFVTDYPKDIKAFYMKLNEDGKTVAAMDLLVPGIGEIIGGSQREDNLALLEERMDAMGLDKEEYWWYLELRKYGSARHAGYGLGFERAIMYLTGMSNIRDVISFPRTPKSAEF.

The protein belongs to the class-II aminoacyl-tRNA synthetase family. In terms of assembly, homodimer.

The protein resides in the cytoplasm. The catalysed reaction is tRNA(Asn) + L-asparagine + ATP = L-asparaginyl-tRNA(Asn) + AMP + diphosphate + H(+). In Alkaliphilus oremlandii (strain OhILAs) (Clostridium oremlandii (strain OhILAs)), this protein is Asparagine--tRNA ligase.